Here is a 273-residue protein sequence, read N- to C-terminus: Octanoyltransferase LipM (273 aa).

One can recognise a BPL/LPL catalytic domain in the interval 33-244 (GKTPPTLRFY…AFTRLYAVEF (212 aa)). Cys146 serves as the catalytic Acyl-thioester intermediate.

It belongs to the octanoyltransferase LipM family. As to quaternary structure, monomer.

It carries out the reaction octanoyl-[ACP] + L-lysyl-[protein] = N(6)-octanoyl-L-lysyl-[protein] + holo-[ACP] + H(+). It functions in the pathway protein modification; protein lipoylation via endogenous pathway; protein N(6)-(lipoyl)lysine from octanoyl-[acyl-carrier-protein]. Catalyzes the transfer of endogenously produced octanoic acid from octanoyl-acyl-carrier-protein onto the lipoyl domain of GcvH, an intermediate carrier during protein lipoylation. The sequence is that of Octanoyltransferase LipM from Moorella thermoacetica (strain ATCC 39073 / JCM 9320).